The chain runs to 187 residues: Protein GrpE (187 aa).

Residues 1 to 23 (MADEQNLDAQAQDQAAEAGAGEE) are disordered. Residues 7 to 23 (LDAQAQDQAAEAGAGEE) show a composition bias toward low complexity.

The protein belongs to the GrpE family. As to quaternary structure, homodimer.

Its subcellular location is the cytoplasm. Its function is as follows. Participates actively in the response to hyperosmotic and heat shock by preventing the aggregation of stress-denatured proteins, in association with DnaK and GrpE. It is the nucleotide exchange factor for DnaK and may function as a thermosensor. Unfolded proteins bind initially to DnaJ; upon interaction with the DnaJ-bound protein, DnaK hydrolyzes its bound ATP, resulting in the formation of a stable complex. GrpE releases ADP from DnaK; ATP binding to DnaK triggers the release of the substrate protein, thus completing the reaction cycle. Several rounds of ATP-dependent interactions between DnaJ, DnaK and GrpE are required for fully efficient folding. This chain is Protein GrpE, found in Pseudomonas savastanoi pv. phaseolicola (strain 1448A / Race 6) (Pseudomonas syringae pv. phaseolicola (strain 1448A / Race 6)).